The following is a 273-amino-acid chain: Putative pyruvate, phosphate dikinase regulatory protein (273 aa).

Glycine 149–threonine 156 is a binding site for ADP.

Belongs to the pyruvate, phosphate/water dikinase regulatory protein family. PDRP subfamily.

It catalyses the reaction N(tele)-phospho-L-histidyl/L-threonyl-[pyruvate, phosphate dikinase] + ADP = N(tele)-phospho-L-histidyl/O-phospho-L-threonyl-[pyruvate, phosphate dikinase] + AMP + H(+). The enzyme catalyses N(tele)-phospho-L-histidyl/O-phospho-L-threonyl-[pyruvate, phosphate dikinase] + phosphate + H(+) = N(tele)-phospho-L-histidyl/L-threonyl-[pyruvate, phosphate dikinase] + diphosphate. Bifunctional serine/threonine kinase and phosphorylase involved in the regulation of the pyruvate, phosphate dikinase (PPDK) by catalyzing its phosphorylation/dephosphorylation. This Rickettsia felis (strain ATCC VR-1525 / URRWXCal2) (Rickettsia azadi) protein is Putative pyruvate, phosphate dikinase regulatory protein.